Consider the following 46-residue polypeptide: Iota-conotoxin-like R11.17 (46 aa).

A 4-hydroxyproline mark is found at Pro-2 and Pro-11. 4 cysteine pairs are disulfide-bonded: Cys-5–Cys-19, Cys-12–Cys-22, Cys-18–Cys-27, and Cys-21–Cys-38. A 4-hydroxyproline modification is found at Pro-29. A D-phenylalanine modification is found at Phe-44.

This sequence belongs to the conotoxin I1 superfamily. In terms of tissue distribution, expressed by the venom duct.

The protein resides in the secreted. Its function is as follows. Iota-conotoxins bind to voltage-gated sodium channels (Nav) and act as agonists by shifting the voltage-dependence of activation to more hyperpolarized levels. Produces general excitatory symptoms. This chain is Iota-conotoxin-like R11.17, found in Conus radiatus (Rayed cone).